A 217-amino-acid chain; its full sequence is Octanoyltransferase (217 aa).

A BPL/LPL catalytic domain is found at 31 to 206; it reads KSVMDEAWLL…ELVSRLGYAE (176 aa). Substrate is bound by residues 70–77, 137–139, and 150–152; these read RGGQVTYH, SLG, and GLA. Cys168 (acyl-thioester intermediate) is an active-site residue.

The protein belongs to the LipB family.

The protein resides in the cytoplasm. The enzyme catalyses octanoyl-[ACP] + L-lysyl-[protein] = N(6)-octanoyl-L-lysyl-[protein] + holo-[ACP] + H(+). It participates in protein modification; protein lipoylation via endogenous pathway; protein N(6)-(lipoyl)lysine from octanoyl-[acyl-carrier-protein]: step 1/2. Functionally, catalyzes the transfer of endogenously produced octanoic acid from octanoyl-acyl-carrier-protein onto the lipoyl domains of lipoate-dependent enzymes. Lipoyl-ACP can also act as a substrate although octanoyl-ACP is likely to be the physiological substrate. This is Octanoyltransferase from Pseudomonas aeruginosa (strain UCBPP-PA14).